Consider the following 142-residue polypeptide: Sec-independent protein translocase protein TatB (142 aa).

Residues 1-21 (MFDFGFSELVVIGVVMLIVVG) traverse the membrane as a helical segment. Positions 99–142 (AAPPDNTTSAESQAAADPAAVDSSQQLELRLDTTPKQVVGSDKA) are disordered. Low complexity predominate over residues 107 to 124 (SAESQAAADPAAVDSSQQ).

This sequence belongs to the TatB family. The Tat system comprises two distinct complexes: a TatABC complex, containing multiple copies of TatA, TatB and TatC subunits, and a separate TatA complex, containing only TatA subunits. Substrates initially bind to the TatABC complex, which probably triggers association of the separate TatA complex to form the active translocon.

It is found in the cell inner membrane. Functionally, part of the twin-arginine translocation (Tat) system that transports large folded proteins containing a characteristic twin-arginine motif in their signal peptide across membranes. Together with TatC, TatB is part of a receptor directly interacting with Tat signal peptides. TatB may form an oligomeric binding site that transiently accommodates folded Tat precursor proteins before their translocation. The polypeptide is Sec-independent protein translocase protein TatB (Azoarcus sp. (strain BH72)).